The following is a 955-amino-acid chain: 2-oxoglutarate dehydrogenase E1 component (955 aa).

Belongs to the alpha-ketoglutarate dehydrogenase family. Homodimer. Part of the 2-oxoglutarate dehydrogenase (OGDH) complex composed of E1 (2-oxoglutarate dehydrogenase), E2 (dihydrolipoamide succinyltransferase) and E3 (dihydrolipoamide dehydrogenase); the complex contains multiple copies of the three enzymatic components (E1, E2 and E3). Requires thiamine diphosphate as cofactor.

The catalysed reaction is N(6)-[(R)-lipoyl]-L-lysyl-[protein] + 2-oxoglutarate + H(+) = N(6)-[(R)-S(8)-succinyldihydrolipoyl]-L-lysyl-[protein] + CO2. Functionally, E1 component of the 2-oxoglutarate dehydrogenase (OGDH) complex which catalyzes the decarboxylation of 2-oxoglutarate, the first step in the conversion of 2-oxoglutarate to succinyl-CoA and CO(2). The sequence is that of 2-oxoglutarate dehydrogenase E1 component from Bacillus cereus (strain ATCC 14579 / DSM 31 / CCUG 7414 / JCM 2152 / NBRC 15305 / NCIMB 9373 / NCTC 2599 / NRRL B-3711).